The primary structure comprises 1213 residues: DNA-directed RNA polymerase subunit beta (1213 aa).

Residues 1153–1213 are disordered; sequence RDMDEDSSEH…ADESDGKVSK (61 aa). Positions 1171–1198 are enriched in basic and acidic residues; that stretch reads MAEEQEKKKLAEETGKSENKEDSNETAD.

This sequence belongs to the RNA polymerase beta chain family. The RNAP catalytic core consists of 2 alpha, 1 beta, 1 beta' and 1 omega subunit. When a sigma factor is associated with the core the holoenzyme is formed, which can initiate transcription.

It carries out the reaction RNA(n) + a ribonucleoside 5'-triphosphate = RNA(n+1) + diphosphate. DNA-dependent RNA polymerase catalyzes the transcription of DNA into RNA using the four ribonucleoside triphosphates as substrates. In Lactobacillus acidophilus (strain ATCC 700396 / NCK56 / N2 / NCFM), this protein is DNA-directed RNA polymerase subunit beta.